The chain runs to 144 residues: Small ribosomal subunit protein bS6 (144 aa).

The segment at 97–144 (DTEQSLIMKSKDEKGDKPERSERRRRDDEEGDAAPAATDTDGDNAEAA) is disordered. Basic and acidic residues predominate over residues 105 to 124 (KSKDEKGDKPERSERRRRDD).

The protein belongs to the bacterial ribosomal protein bS6 family.

Its function is as follows. Binds together with bS18 to 16S ribosomal RNA. The protein is Small ribosomal subunit protein bS6 of Xanthomonas campestris pv. campestris (strain 8004).